Reading from the N-terminus, the 111-residue chain is Estrogen receptor (111 aa).

The segment at 1-42 (PSGYAVREAGPPAYYRPNSDNRRQGGRERLASTSDKGSMAVE) is disordered. The tract at residues 1–49 (PSGYAVREAGPPAYYRPNSDNRRQGGRERLASTSDKGSMAVESAKETRY) is modulating. Residues 19–30 (SDNRRQGGRERL) are compositionally biased toward basic and acidic residues. Ser32 carries the phosphoserine modification. 2 consecutive NR C4-type zinc fingers follow at residues 50–70 (CAVC…CEGC) and 86–110 (CPAT…LRKC). The nuclear receptor DNA-binding region spans 50 to 111 (CAVCNDYASG…CQACRLRKCY (62 aa)).

The protein belongs to the nuclear hormone receptor family. NR3 subfamily. As to quaternary structure, binds DNA as a homodimer. Can form a heterodimer with ESR2. Interacts with coactivator NCOA5. Interacts with PELP1, the interaction is enhanced by 17-beta-estradiol; the interaction increases ESR1 transcriptional activity. Interacts with NCOA7; the interaction is ligand-inducible. Interacts with AKAP13, CUEDC2, HEXIM1, KDM5A, MAP1S, SMARD1, and UBE1C. Interacts with MUC1; the interaction is stimulated by 7 beta-estradiol (E2) and enhances ESR1-mediated transcription. Interacts with DNTTIP2, and UIMC1. Interacts with KMT2D/MLL2. Interacts with ATAD2; the interaction is enhanced by estradiol. Interacts with KIF18A and LDB1. Interacts with RLIM (via its C-terminus). Interacts with MACROD1. Interacts with SH2D4A and PLCG. Interacts with SH2D4A; the interaction blocks binding to PLCG and inhibits estrogen-induced cell proliferation. Interacts with DYNLL1. Interacts with CCDC62; the interaction requires estradiol and appears to enhance the transcription of target genes. Interacts with NR2C1; the interaction prevents homodimerization of ESR1 and suppresses its transcriptional activity and cell growth. Interacts with DNAAF4. Interacts with PRMT2. Interacts with RBFOX2. Interacts with EP300; the interaction is estrogen-dependent and enhanced by CITED1. Interacts with CITED1; the interaction is estrogen-dependent. Interacts with FAM120B, FOXL2, PHB2 and SLC30A9. Interacts with coactivators NCOA3 and NCOA6. Interacts with STK3/MST2 only in the presence of SAV1 and vice-versa. Binds to CSNK1D. Interacts with NCOA2; NCOA2 can interact with ESR1 AF-1 and AF-2 domains simultaneously and mediate their transcriptional synergy. Interacts with DDX5. Interacts with NCOA1; the interaction seems to require a self-association of N-terminal and C-terminal regions. Interacts with ZNF366, DDX17, NFKB1, RELA, SP1 and SP3. Interacts with NRIP1. Interacts with GPER1; the interaction occurs in an estrogen-dependent manner. Interacts with CLOCK and the interaction is stimulated by estrogen. Interacts with TRIP4 (ufmylated); estrogen dependent. Interacts with LMTK3; the interaction phosphorylates ESR1 (in vitro) and protects it against proteasomal degradation. Interacts with CCAR2 (via N-terminus) in a ligand-independent manner. Interacts with ZFHX3. Interacts with SFR1 in a ligand-dependent and -independent manner. Interacts with DCAF13, LATS1 and DCAF1; regulates ESR1 ubiquitination and ubiquitin-mediated proteasomal degradation. Interacts (via DNA-binding domain) with POU4F2 (C-terminus); this interaction increases the estrogen receptor ESR1 transcriptional activity in a DNA- and ligand 17-beta-estradiol-independent manner. Interacts with ESRRB isoform 1. Interacts with UBE3A and WBP2. Interacts with GTF2B. Interacts with RBM39. In the absence of hormonal ligand, interacts with TACC1. Interacts with PI3KR1 or PI3KR2 and PTK2/FAK1. Interacts with SRC. Interacts with BAG1; the interaction is promoted in the absence of estradiol (17-beta-estradiol/E2). Interacts with and ubiquitinated by STUB1; the interaction is promoted in the absence of estradiol (17-beta-estradiol/E2). Interacts with NEDD8. Post-translationally, ubiquitinated; regulated by LATS1 via DCAF1 it leads to ESR1 proteasomal degradation. Deubiquitinated by OTUB1. Ubiquitinated by STUB1/CHIP; in the CA1 hippocampal region following loss of endogenous circulating estradiol (17-beta-estradiol/E2). Ubiquitinated by UBR5, leading to its degradation: UBR5 specifically recognizes and binds ligand-bound ESR1 when it is not associated with coactivators (NCOAs). In presence of NCOAs, the UBR5-degron is not accessible, preventing its ubiquitination and degradation. Dimethylated by PRMT1. Demethylated by JMJD6. In terms of processing, palmitoylated by ZDHHC7 and ZDHHC21. This modification is required for plasma membrane targeting and for rapid intracellular signaling via ERK and AKT kinases and cAMP generation, but not for signaling mediated by the nuclear hormone receptor. Post-translationally, phosphorylated by cyclin A/CDK2 and CK1. Phosphorylation probably enhances transcriptional activity. Dephosphorylation by PPP5C inhibits its transactivation activity. Phosphorylated by LMTK3 (in vitro).

It is found in the nucleus. It localises to the cytoplasm. Its subcellular location is the golgi apparatus. The protein resides in the cell membrane. In terms of biological role, nuclear hormone receptor. The steroid hormones and their receptors are involved in the regulation of eukaryotic gene expression and affect cellular proliferation and differentiation in target tissues. Ligand-dependent nuclear transactivation involves either direct homodimer binding to a palindromic estrogen response element (ERE) sequence or association with other DNA-binding transcription factors, such as AP-1/c-Jun, c-Fos, ATF-2, Sp1 and Sp3, to mediate ERE-independent signaling. Ligand binding induces a conformational change allowing subsequent or combinatorial association with multiprotein coactivator complexes through LXXLL motifs of their respective components. Mutual transrepression occurs between the estrogen receptor (ER) and NF-kappa-B in a cell-type specific manner. Decreases NF-kappa-B DNA-binding activity and inhibits NF-kappa-B-mediated transcription from the IL6 promoter and displace RELA/p65 and associated coregulators from the promoter. Recruited to the NF-kappa-B response element of the CCL2 and IL8 promoters and can displace CREBBP. Present with NF-kappa-B components RELA/p65 and NFKB1/p50 on ERE sequences. Can also act synergistically with NF-kappa-B to activate transcription involving respective recruitment adjacent response elements; the function involves CREBBP. Can activate the transcriptional activity of TFF1. Also mediates membrane-initiated estrogen signaling involving various kinase cascades. Essential for MTA1-mediated transcriptional regulation of BRCA1 and BCAS3. Maintains neuronal survival in response to ischemic reperfusion injury when in the presence of circulating estradiol (17-beta-estradiol/E2). The chain is Estrogen receptor (ESR1) from Ovis aries (Sheep).